The following is a 29-amino-acid chain: Lambda-theraphotoxin-Ec2a (29 aa).

Cystine bridges form between C2-C16, C9-C21, and C15-C25.

Belongs to the neurotoxin 30 (phrixotoxin) family. Expressed by the venom gland.

The protein resides in the secreted. Functionally, insect-selective neurotoxin that potently blocks insect calcium-activated potassium (BKCa) channels (Slo-type) in cockroach dorsal unpaired median (DUM) neurons (IC(50)=3.7 nM). This occurs in the absence of any shifts in the voltage dependence of activation. At high concentrations (330 nM), it partially inhibits cockroach delayed-rectifier potassium channels (Kv) currents. May interact with the turret and/or loop region of the external entrance to the channel and does not project deeply into the pore of the channel. In vivo, does not show toxicity in mice after intracerebroventricular injection of up to 25 pmol/g (1.8 ug/20 g mouse). The protein is Lambda-theraphotoxin-Ec2a of Eucratoscelus constrictus (African red-rump baboon spider).